The sequence spans 431 residues: Glucose-1-phosphate adenylyltransferase (431 aa).

Alpha-D-glucose 1-phosphate is bound by residues Tyr-108, Gly-174, 189–190, and Ser-207; that span reads EK.

This sequence belongs to the bacterial/plant glucose-1-phosphate adenylyltransferase family. Homotetramer.

The enzyme catalyses alpha-D-glucose 1-phosphate + ATP + H(+) = ADP-alpha-D-glucose + diphosphate. It functions in the pathway glycan biosynthesis; glycogen biosynthesis. Involved in the biosynthesis of ADP-glucose, a building block required for the elongation reactions to produce glycogen. Catalyzes the reaction between ATP and alpha-D-glucose 1-phosphate (G1P) to produce pyrophosphate and ADP-Glc. The chain is Glucose-1-phosphate adenylyltransferase from Actinobacillus succinogenes (strain ATCC 55618 / DSM 22257 / CCUG 43843 / 130Z).